Here is a 957-residue protein sequence, read N- to C-terminus: Glycine dehydrogenase (decarboxylating) (957 aa).

Lysine 708 bears the N6-(pyridoxal phosphate)lysine mark.

Belongs to the GcvP family. In terms of assembly, the glycine cleavage system is composed of four proteins: P, T, L and H. Requires pyridoxal 5'-phosphate as cofactor.

The catalysed reaction is N(6)-[(R)-lipoyl]-L-lysyl-[glycine-cleavage complex H protein] + glycine + H(+) = N(6)-[(R)-S(8)-aminomethyldihydrolipoyl]-L-lysyl-[glycine-cleavage complex H protein] + CO2. Functionally, the glycine cleavage system catalyzes the degradation of glycine. The P protein binds the alpha-amino group of glycine through its pyridoxal phosphate cofactor; CO(2) is released and the remaining methylamine moiety is then transferred to the lipoamide cofactor of the H protein. The chain is Glycine dehydrogenase (decarboxylating) from Escherichia coli O8 (strain IAI1).